The sequence spans 935 residues: Lon protease homolog 2, peroxisomal (935 aa).

The Lon N-terminal domain occupies 12–296; that stretch reads LPVHRLERNL…NLRRLVEEMG (285 aa). Residue 452-459 participates in ATP binding; it reads GPPGVGKT. Positions 692–922 constitute a Lon proteolytic domain; that stretch reads QKGYGVVNGL…SDVLASVWEG (231 aa). Catalysis depends on residues serine 789 and lysine 832. The Microbody targeting signal motif lies at 933 to 935; that stretch reads ARI.

It belongs to the peptidase S16 family.

The protein localises to the peroxisome matrix. The catalysed reaction is Hydrolysis of proteins in presence of ATP.. In terms of biological role, ATP-dependent serine protease that mediates the selective degradation of misfolded and unassembled polypeptides in the peroxisomal matrix. Necessary for type 2 peroxisome targeting signal (PTS2)-containing protein processing and facilitates peroxisome matrix protein import. The sequence is that of Lon protease homolog 2, peroxisomal (PLN) from Pichia angusta (Yeast).